Here is a 359-residue protein sequence, read N- to C-terminus: Phosphoserine aminotransferase (359 aa).

Arginine 41 is an L-glutamate binding site. Pyridoxal 5'-phosphate-binding positions include 75 to 76 (AS), tryptophan 101, threonine 152, aspartate 171, and glutamine 194. At lysine 195 the chain carries N6-(pyridoxal phosphate)lysine. 236 to 237 (NT) is a binding site for pyridoxal 5'-phosphate.

Belongs to the class-V pyridoxal-phosphate-dependent aminotransferase family. SerC subfamily. As to quaternary structure, homodimer. The cofactor is pyridoxal 5'-phosphate.

It localises to the cytoplasm. The enzyme catalyses O-phospho-L-serine + 2-oxoglutarate = 3-phosphooxypyruvate + L-glutamate. It carries out the reaction 4-(phosphooxy)-L-threonine + 2-oxoglutarate = (R)-3-hydroxy-2-oxo-4-phosphooxybutanoate + L-glutamate. The protein operates within amino-acid biosynthesis; L-serine biosynthesis; L-serine from 3-phospho-D-glycerate: step 2/3. It participates in cofactor biosynthesis; pyridoxine 5'-phosphate biosynthesis; pyridoxine 5'-phosphate from D-erythrose 4-phosphate: step 3/5. Functionally, catalyzes the reversible conversion of 3-phosphohydroxypyruvate to phosphoserine and of 3-hydroxy-2-oxo-4-phosphonooxybutanoate to phosphohydroxythreonine. The sequence is that of Phosphoserine aminotransferase from Acinetobacter baumannii (strain AB307-0294).